The primary structure comprises 450 residues: ATP-dependent protease ATPase subunit HslU (450 aa).

Residues Val27, 69 to 74, Asp263, Glu328, and Arg400 contribute to the ATP site; that span reads GVGKTE.

The protein belongs to the ClpX chaperone family. HslU subfamily. As to quaternary structure, a double ring-shaped homohexamer of HslV is capped on each side by a ring-shaped HslU homohexamer. The assembly of the HslU/HslV complex is dependent on binding of ATP.

Its subcellular location is the cytoplasm. Its function is as follows. ATPase subunit of a proteasome-like degradation complex; this subunit has chaperone activity. The binding of ATP and its subsequent hydrolysis by HslU are essential for unfolding of protein substrates subsequently hydrolyzed by HslV. HslU recognizes the N-terminal part of its protein substrates and unfolds these before they are guided to HslV for hydrolysis. The chain is ATP-dependent protease ATPase subunit HslU from Aquifex aeolicus (strain VF5).